The following is a 128-amino-acid chain: Large ribosomal subunit protein mL51 (128 aa).

A mitochondrion-targeting transit peptide spans 1–31 (MAGSVPWAASRRLWGWVPSACRSFSLGVPRL).

Belongs to the mitochondrion-specific ribosomal protein mL51 family. In terms of assembly, component of the mitochondrial ribosome large subunit (39S) which comprises a 16S rRNA and about 50 distinct proteins. Interacts with OXA1L.

The protein resides in the mitochondrion. This chain is Large ribosomal subunit protein mL51 (Mrpl51), found in Mus musculus (Mouse).